Here is a 51-residue protein sequence, read N- to C-terminus: Large ribosomal subunit protein eL39 (51 aa).

This sequence belongs to the eukaryotic ribosomal protein eL39 family.

The polypeptide is Large ribosomal subunit protein eL39 (Sulfurisphaera tokodaii (strain DSM 16993 / JCM 10545 / NBRC 100140 / 7) (Sulfolobus tokodaii)).